We begin with the raw amino-acid sequence, 240 residues long: Pathogenesis-related thaumatin-like protein 3.5 (240 aa).

The N-terminal stretch at Met-1–Ala-20 is a signal peptide. 8 cysteine pairs are disulfide-bonded: Cys-31-Cys-237, Cys-79-Cys-89, Cys-94-Cys-100, Cys-145-Cys-227, Cys-150-Cys-210, Cys-158-Cys-173, Cys-177-Cys-186, and Cys-187-Cys-197.

It belongs to the thaumatin family. As to expression, strongly expressed in pollen grains. Also present at weak levels in seedling roots, in sapling stems and in developing male strobili.

Its function is as follows. May be involved in disease resistance. This is Pathogenesis-related thaumatin-like protein 3.5 from Cryptomeria japonica (Japanese cedar).